A 512-amino-acid polypeptide reads, in one-letter code: MADTVRKKQKLVVVGAGPVGSLAALYAAARGDEVEIYELRGDLRDPSTVPLNFTKSINLALSERGITAMKHSNREDLVNNVLRDTIPMHGRMIHGRDRGKLWEAAQAYDVHGRAINAVDRSTLNNALLDELECTPNVKLFFNHKLTGADFNARKAWFERRVPGEAPLPNSANRVPEIEVDFDFMIGADGAHSAARYHMMKFARVDYQQEYIDTLWCEFRIPPTEDGDFRISPNHLHIWPGREFMFIALPSADKSFTCTLFAPAAHYKHLGSSPQNLVESFKDHFPGVCPELISPEDLQEQFTTNPHLPLISLKCKPHHYNSSIVIVGDAAHAVLPFYGQGLNAGLEDIRVLFECLDKHGSYNLDASPDARREARAKAFQAYTDQRCADTHAINDLSKQNYLEMRWGVKTPLYKLRKSVEEALDRYVPSLGWQTQYSRVSFSNQRYSDVIRSARWQGRILALGLATTLISTVGVIAYVFWKKPRQYSPLSLLRYSWRRLSSIWVTMFRTIAYA.

The protein belongs to the aromatic-ring hydroxylase family. KMO subfamily. Requires FAD as cofactor.

Its subcellular location is the mitochondrion outer membrane. The catalysed reaction is L-kynurenine + NADPH + O2 + H(+) = 3-hydroxy-L-kynurenine + NADP(+) + H2O. The protein operates within cofactor biosynthesis; NAD(+) biosynthesis; quinolinate from L-kynurenine: step 1/3. Its function is as follows. Catalyzes the hydroxylation of L-kynurenine (L-Kyn) to form 3-hydroxy-L-kynurenine (L-3OHKyn). Required for synthesis of quinolinic acid. In Aspergillus fumigatus (strain ATCC MYA-4609 / CBS 101355 / FGSC A1100 / Af293) (Neosartorya fumigata), this protein is Kynurenine 3-monooxygenase (bna4).